The following is a 250-amino-acid chain: Ubiquinone/menaquinone biosynthesis C-methyltransferase UbiE (250 aa).

S-adenosyl-L-methionine contacts are provided by residues Thr-74, Asp-94, Asp-122–Ala-123, and Ser-139.

Belongs to the class I-like SAM-binding methyltransferase superfamily. MenG/UbiE family.

It carries out the reaction a 2-demethylmenaquinol + S-adenosyl-L-methionine = a menaquinol + S-adenosyl-L-homocysteine + H(+). The catalysed reaction is a 2-methoxy-6-(all-trans-polyprenyl)benzene-1,4-diol + S-adenosyl-L-methionine = a 5-methoxy-2-methyl-3-(all-trans-polyprenyl)benzene-1,4-diol + S-adenosyl-L-homocysteine + H(+). It functions in the pathway quinol/quinone metabolism; menaquinone biosynthesis; menaquinol from 1,4-dihydroxy-2-naphthoate: step 2/2. The protein operates within cofactor biosynthesis; ubiquinone biosynthesis. Functionally, methyltransferase required for the conversion of demethylmenaquinol (DMKH2) to menaquinol (MKH2) and the conversion of 2-polyprenyl-6-methoxy-1,4-benzoquinol (DDMQH2) to 2-polyprenyl-3-methyl-6-methoxy-1,4-benzoquinol (DMQH2). This chain is Ubiquinone/menaquinone biosynthesis C-methyltransferase UbiE, found in Dinoroseobacter shibae (strain DSM 16493 / NCIMB 14021 / DFL 12).